Here is a 676-residue protein sequence, read N- to C-terminus: Solute carrier family 26 member 10 (676 aa).

Residues 1–24 (MSGPLASGTCSDPEEVSDLKSPLS) are disordered. The next 11 helical transmembrane spans lie at 101–121 (AVAG…FALL), 124–144 (VPPV…SLLG), 149–165 (LSTG…GSVV), 190–210 (VGAA…MFVL), 226–246 (ALTS…LLGL), 267–287 (ALSQ…VLLV), 300–320 (LLTP…LCFT), 353–373 (ILAD…SLAS), 398–418 (ISSL…SLLV), 426–446 (LAGL…RPFF), and 487–507 (IVTW…VGVV). Positions 539 to 660 (ESRKLLQVPG…VSVQDAAAHA (122 aa)) constitute an STAS domain.

Belongs to the SLC26A/SulP transporter (TC 2.A.53) family.

The protein localises to the membrane. Chloride/bicarbonate exchanger. The sequence is that of Solute carrier family 26 member 10 (Slc26a10) from Mus musculus (Mouse).